A 306-amino-acid polypeptide reads, in one-letter code: Glutaminase (306 aa).

Positions 62, 114, 159, 166, 190, 242, and 260 each coordinate substrate.

It belongs to the glutaminase family. Homotetramer.

The catalysed reaction is L-glutamine + H2O = L-glutamate + NH4(+). The protein is Glutaminase of Clostridium tetani (strain Massachusetts / E88).